Here is a 101-residue protein sequence, read N- to C-terminus: Protein S100-A4 (101 aa).

An N-acetylalanine modification is found at A2. The residue at position 7 (K7) is an N6-acetyllysine. EF-hand domains are found at residues V13–K48 and T50–M85. The Ca(2+) site is built by K28 and E33. K35 is subject to N6-acetyllysine. Positions 63, 65, 67, 69, and 74 each coordinate Ca(2+).

The protein belongs to the S-100 family. In terms of assembly, homodimer. Interacts with PPFIBP1 in a calcium-dependent mode. Interacts with PGLYRP1; this complex acts as a chemoattractant that promotes lymphocyte movement. Interacts with MYH9; this interaction increases cell motility. Interacts with Annexin 2/ANXA2. Interacts with TP53; this interaction promotes TP53 degradation. Interacts with CCR5 and CXCR3. Interacts with FCGR3A; this interaction inhibits PKC-dependent phosphorylation of FCGR3A.

The protein resides in the secreted. It localises to the nucleus. It is found in the cytoplasm. Its function is as follows. Calcium-binding protein that plays a role in various cellular processes including motility, angiogenesis, cell differentiation, apoptosis, and autophagy. Increases cell motility and invasiveness by interacting with non-muscle myosin heavy chain (NMMHC) IIA/MYH9. Mechanistically, promotes filament depolymerization and increases the amount of soluble myosin-IIA, resulting in the formation of stable protrusions facilitating chemotaxis. Also modulates the pro-apoptotic function of TP53 by binding to its C-terminal transactivation domain within the nucleus and reducing its protein levels. Within the extracellular space, stimulates cytokine production including granulocyte colony-stimulating factor and CCL24 from T-lymphocytes. In addition, stimulates T-lymphocyte chemotaxis by acting as a chemoattractant complex with PGLYRP1 that promotes lymphocyte migration via CCR5 and CXCR3 receptors. In Bos taurus (Bovine), this protein is Protein S100-A4 (S100A4).